Here is a 199-residue protein sequence, read N- to C-terminus: Recombination protein RecR (199 aa).

A C4-type zinc finger spans residues 57-72 (CQKCRTFTEQSLCPIC). Residues 81 to 176 (DTLCVVETPA…AVSRIAHGVP (96 aa)) enclose the Toprim domain.

It belongs to the RecR family.

In terms of biological role, may play a role in DNA repair. It seems to be involved in an RecBC-independent recombinational process of DNA repair. It may act with RecF and RecO. The chain is Recombination protein RecR from Shewanella amazonensis (strain ATCC BAA-1098 / SB2B).